The chain runs to 93 residues: Large ribosomal subunit protein uL23cz/uL23cy (93 aa).

This sequence belongs to the universal ribosomal protein uL23 family. Part of the 50S ribosomal subunit.

It localises to the plastid. The protein resides in the chloroplast. Binds to 23S rRNA. In Eucalyptus globulus subsp. globulus (Tasmanian blue gum), this protein is Large ribosomal subunit protein uL23cz/uL23cy (rpl23-A).